The following is a 285-amino-acid chain: Acetylglutamate kinase (285 aa).

Residues 64–65, R86, and N181 contribute to the substrate site; that span reads GG.

It belongs to the acetylglutamate kinase family. ArgB subfamily.

It is found in the cytoplasm. It catalyses the reaction N-acetyl-L-glutamate + ATP = N-acetyl-L-glutamyl 5-phosphate + ADP. Its pathway is amino-acid biosynthesis; L-arginine biosynthesis; N(2)-acetyl-L-ornithine from L-glutamate: step 2/4. Its function is as follows. Catalyzes the ATP-dependent phosphorylation of N-acetyl-L-glutamate. The protein is Acetylglutamate kinase of Clostridium beijerinckii (strain ATCC 51743 / NCIMB 8052) (Clostridium acetobutylicum).